The sequence spans 349 residues: Dehydrogenase FPY6 (349 aa).

This sequence belongs to the Gfo/Idh/MocA family.

It participates in secondary metabolite biosynthesis. Dehydrogenase; part of the gene cluster that mediates the biosynthesis of the gamma-pyrones fusapyrone (FPY) and deoxyfusapyrone (dFPY). FPY is an undecaketide and thus likely synthesized by the polyketide synthase FPY1 from acetyl-CoA functioning as starter unit and the addition of 10 malonyl-CoA extender units by successive Claisen-condensations. Next to this, FPY shares some rare features: C-glycosylated 4-deoxyglucose at C-3, a gem-dimethyl group at C-13, and an alpha-beta to beta-gamma double bond shift at C-20. During FPY biosynthesis mono-C-methyl groups are transferred to the tetra-, penta-, hexa- and heptaketide, while two C-methyl groups are transferred to the nonaketide, suggesting that the CMet domain is programmed to selectively catalyze two successive C-alpha-methylation reactions of the nonaketide, while other alpha-carbons are non- or mono-methylated only. While the origin of the 4'-deoxyglucose moiety remains opaque, its transfer to C-3 is most likely mediated by the C-glycosyltransferase FPY2. Next to this, the hydroxyl group present at C-33 and discriminating between FPY and dFPY, is likely to be installed by the cytochrome P450 monooxygenase FPY7. No putative function can be predicted for the remaining genes FPY3-FPY6. The sequence is that of Dehydrogenase FPY6 from Fusarium mangiferae (Mango malformation disease fungus).